The chain runs to 165 residues: MTDEALLTQVLMPYKDHCKYLRSAVVTETDGRASARCEFEIPESCYIDDTGHLNSVEVNICYNQMMYYLVAKSVKEGLGTGFESWTLEDFWKHQLPDILIARFSSNFRRPVNPRVFSGEMEFRSVTRRAPAGGSPFVHADTAFRYWDADAGRCDGEATLAFVNVP.

It belongs to the FcoT family.

The catalysed reaction is a (3R)-3-[(carboxymethyl)amino]fatty acid + holo-[ACP] + H(+) = a (2E)-enoyl-[ACP] + glycine + H2O. It catalyses the reaction (3R)-3-[(carboxymethyl)amino]butanoate + holo-[ACP] + H(+) = (2E)-butenoyl-[ACP] + glycine + H2O. Functionally, involved in the biosynthesis of a unique class of isonitrile lipopeptides (INLPs). Catalyzes a Michael addition of glycine to the beta-position of an alpha,beta-unsaturated fatty acyl-[ACP], producing a (3R)-3-[(carboxymethyl)amino]fatty acid. Acts on the (2E)-butenoyl moiety loaded on the acyl-carrier protein ScoB, forming the product (3R)-3-[(carboxymethyl)amino]butanoate released from ScoB. The sequence is that of (2E)-enoyl-[ACP] glycyltransferase from Streptomyces coeruleorubidus.